Consider the following 66-residue polypeptide: Protein translocase subunit SecE (66 aa).

Residues 29-49 traverse the membrane as a helical segment; that stretch reads LIASTLVVVAAVFIFSLICLV.

Belongs to the SecE/SEC61-gamma family. As to quaternary structure, component of the Sec protein translocase complex. Heterotrimer consisting of SecY, SecE and SecG subunits. The heterotrimers can form oligomers, although 1 heterotrimer is thought to be able to translocate proteins. Interacts with the ribosome. Interacts with SecDF, and other proteins may be involved. Interacts with SecA.

It localises to the cell inner membrane. Functionally, essential subunit of the Sec protein translocation channel SecYEG. Clamps together the 2 halves of SecY. May contact the channel plug during translocation. The polypeptide is Protein translocase subunit SecE (Rickettsia typhi (strain ATCC VR-144 / Wilmington)).